The primary structure comprises 527 residues: Fusicoccadiene C-8 hydroxylase (527 aa).

Residues 15-35 form a helical membrane-spanning segment; the sequence is GKPLLLFLILITLTYSLGIVF. An N-linked (GlcNAc...) asparagine glycan is attached at Asn-125. Residue Cys-465 participates in heme binding. N-linked (GlcNAc...) asparagine glycosylation is present at Asn-496.

Belongs to the cytochrome P450 family. The cofactor is heme.

Its subcellular location is the membrane. It participates in mycotoxin biosynthesis. Functionally, cytochrome P450 monooxygenase; part of the gene cluster that mediates the biosynthesis of the diterpene glucoside brassicicene C. In the first step of the brassicicene C biosynthesis, the bifunctional diterpene synthase bsc8 that possesses both prenyl transferase and terpene cyclase activity, converts isopentenyl diphosphate and dimethylallyl diphosphate into geranylgeranyl diphosphate (GGDP) that is further converted into fusicocca-2,10(14)-diene, the first precursor for brassicicene C. Fusicocca-2,10(14)-diene is then substrate of cytochrome P450 monooxygenase bsc1 for hydroxylation at the C-8 position. Oxidation at C-16 position to aldehyde is then catalyzed by the cytochrome P450 monooyxygenase bsc7, yielding fusicocca-2,10(14)-diene-8-beta,16-diol. Follows the isomerization of the double bond and reduction of aldehyde to alcohol catalyzed by the short-chain dehydrogenase/reductase bsc3 to yield the diol compound fusicocca-1,10(14)-diene-8 beta,16-diol. The next step is the oxidation at the C-3 position of fusicocca-2,10(14)-diene-8-beta,16-diol catalyzed by the alpha-ketoglutarate dependent dioxygenase bsc9, to produce a triol compound. Methylation of the hydroxy group at position 16 is performed by the methyltransferase bsc6. 16-O-methylation is followed by oxidation at the C-13 position to ketone and an alkyl shift of the methyl group leads to brassicicene C. Although the probable acetyltransferase bsc4 is included in the gene cluster, no acetylation reactions are necessary for brassicicene C biosynthesis. However, the fact that brassicicene E, which is a structurally related compound having an acetoxy group at position 12, was previously isolated from another strain of A.brassicicola suggests that the ATCC 96836 strain might also produce a small amount of brassicicene E. This is Fusicoccadiene C-8 hydroxylase from Alternaria brassicicola (Dark leaf spot agent).